The chain runs to 166 residues: Protein adg1 (166 aa).

The signal sequence occupies residues 1-22; the sequence is MFLRSIFQTLCAVSFLAGSVFA.

Its subcellular location is the endoplasmic reticulum. The protein is Protein adg1 (adg1) of Schizosaccharomyces pombe (strain 972 / ATCC 24843) (Fission yeast).